The sequence spans 275 residues: S-methyl-5'-thioadenosine phosphorylase (275 aa).

Residues S20, R62–H63, and S95–A96 each bind phosphate. Intrachain disulfides connect C143–C210, C205–C266, and C264–C267. M195 is a substrate binding site. T196 is a binding site for phosphate. D219–D221 is a substrate binding site.

This sequence belongs to the PNP/MTAP phosphorylase family. MTAP subfamily. As to quaternary structure, homohexamer. Dimer of a homotrimer.

The enzyme catalyses S-methyl-5'-thioadenosine + phosphate = 5-(methylsulfanyl)-alpha-D-ribose 1-phosphate + adenine. It functions in the pathway amino-acid biosynthesis; L-methionine biosynthesis via salvage pathway; S-methyl-5-thio-alpha-D-ribose 1-phosphate from S-methyl-5'-thioadenosine (phosphorylase route): step 1/1. Its function is as follows. Catalyzes the reversible phosphorylation of S-methyl-5'-thioadenosine (MTA) to adenine and 5-methylthioribose-1-phosphate. Involved in the breakdown of MTA, a major by-product of polyamine biosynthesis. Responsible for the first step in the methionine salvage pathway after MTA has been generated from S-adenosylmethionine. Has broad substrate specificity with 6-aminopurine nucleosides as preferred substrates. In Aeropyrum pernix (strain ATCC 700893 / DSM 11879 / JCM 9820 / NBRC 100138 / K1), this protein is S-methyl-5'-thioadenosine phosphorylase.